The chain runs to 375 residues: 23S rRNA (uracil(747)-C(5))-methyltransferase RlmC (375 aa).

Positions 3, 11, 14, and 87 each coordinate [4Fe-4S] cluster. S-adenosyl-L-methionine contacts are provided by glutamine 212, phenylalanine 241, glutamate 262, and asparagine 307. Cysteine 334 (nucleophile) is an active-site residue.

Belongs to the class I-like SAM-binding methyltransferase superfamily. RNA M5U methyltransferase family. RlmC subfamily.

The catalysed reaction is uridine(747) in 23S rRNA + S-adenosyl-L-methionine = 5-methyluridine(747) in 23S rRNA + S-adenosyl-L-homocysteine + H(+). In terms of biological role, catalyzes the formation of 5-methyl-uridine at position 747 (m5U747) in 23S rRNA. The polypeptide is 23S rRNA (uracil(747)-C(5))-methyltransferase RlmC (Escherichia coli O9:H4 (strain HS)).